The chain runs to 445 residues: Phosphoglucosamine mutase (445 aa).

Residue Ser102 is the Phosphoserine intermediate of the active site. Ser102, Asp241, Asp243, and Asp245 together coordinate Mg(2+). Ser102 carries the phosphoserine modification.

This sequence belongs to the phosphohexose mutase family. Requires Mg(2+) as cofactor. In terms of processing, activated by phosphorylation.

The enzyme catalyses alpha-D-glucosamine 1-phosphate = D-glucosamine 6-phosphate. Its function is as follows. Catalyzes the conversion of glucosamine-6-phosphate to glucosamine-1-phosphate. This is Phosphoglucosamine mutase from Haemophilus influenzae (strain ATCC 51907 / DSM 11121 / KW20 / Rd).